The sequence spans 384 residues: N-acetylneuraminate epimerase (384 aa).

The N-terminal stretch at 1–24 (MNMKTLLTYATLLSVTAFSHVVYA) is a signal peptide. 7 Kelch repeats span residues 46–90 (KVYV…SVIG), 92–145 (YIYL…YSPD), 147–184 (RQIL…RIVD), 185–230 (DYMG…VIEG), 233–281 (VTLI…VAGA), 303–352 (QAFE…TTSE), and 354–383 (VLIV…VEVI). The active-site Proton acceptor is Glu-239.

It belongs to the NanM family. Homodimer.

It localises to the periplasm. It catalyses the reaction N-acetyl-alpha-neuraminate = N-acetyl-beta-neuraminate. Its function is as follows. Converts alpha-N-acetylneuranimic acid (Neu5Ac) to the beta-anomer, accelerating the equilibrium between the alpha- and beta-anomers. Probably facilitates sialidase-negative bacteria to compete successfully for limited amounts of extracellular Neu5Ac, which is likely taken up in the beta-anomer. In addition, the rapid removal of sialic acid from solution might be advantageous to the bacterium to damp down host responses. The protein is N-acetylneuraminate epimerase of Vibrio cholerae serotype O1 (strain ATCC 39315 / El Tor Inaba N16961).